Consider the following 645-residue polypeptide: Bifurcating [FeFe] hydrogenase alpha subunit (645 aa).

Positions Met-1–Glu-76 constitute a 2Fe-2S ferredoxin-type domain. 4 residues coordinate [2Fe-2S] cluster: Cys-34, Cys-45, Cys-48, and Cys-60. The region spanning Glu-76–Gly-115 is the 4Fe-4S His(Cys)3-ligated-type domain. Residues His-92, Cys-96, Cys-99, Cys-105, Cys-143, Cys-146, Cys-149, Cys-153, Cys-186, Cys-189, Cys-192, Cys-196, Cys-295, Cys-350, Cys-482, and Cys-486 each coordinate [4Fe-4S] cluster. 2 consecutive 4Fe-4S ferredoxin-type domains span residues Ser-133 to Phe-164 and Asp-178 to Asp-206. Residue Cys-486 participates in Fe(2+) binding. Residues Cys-575, Cys-580, Cys-612, and Cys-616 each contribute to the [2Fe-2S] cluster site.

As to quaternary structure, heterotrimer composed of HydA (alpha subunit), HydB (beta subunit) and HydC (gamma subunit). Near neutral and acidic pH conditions favor oligomerization of the heterotrimeric holoenzyme. Requires [2Fe-2S] cluster as cofactor. [4Fe-4S] cluster is required as a cofactor. Fe(2+) serves as cofactor.

It is found in the cytoplasm. The enzyme catalyses 2 H2 + 2 oxidized [2Fe-2S]-[ferredoxin] + NAD(+) = 2 reduced [2Fe-2S]-[ferredoxin] + NADH + 3 H(+). In terms of biological role, catalyzes the oxidation of the physiological electron carriers NADH and reduced ferredoxin, coupled to the production of H(2). Acts as a bifurcating [FeFe] hydrogenase, which uses the exergonic oxidation of reduced ferredoxin to drive the unfavorable oxidation of NADH to produce H(2). The alpha subunit contains the catalytic H-cluster. This is Bifurcating [FeFe] hydrogenase alpha subunit from Thermotoga maritima (strain ATCC 43589 / DSM 3109 / JCM 10099 / NBRC 100826 / MSB8).